A 588-amino-acid chain; its full sequence is Aspartate--tRNA ligase (588 aa).

Residue E174 coordinates L-aspartate. Residues Q198–K201 form an aspartate region. An L-aspartate-binding site is contributed by R220. Residues R220–E222 and Q229 each bind ATP. H448 contributes to the L-aspartate binding site. An ATP-binding site is contributed by E482. R489 contacts L-aspartate. G534–R537 contacts ATP.

The protein belongs to the class-II aminoacyl-tRNA synthetase family. Type 1 subfamily. Homodimer.

The protein localises to the cytoplasm. It catalyses the reaction tRNA(Asp) + L-aspartate + ATP = L-aspartyl-tRNA(Asp) + AMP + diphosphate. Catalyzes the attachment of L-aspartate to tRNA(Asp) in a two-step reaction: L-aspartate is first activated by ATP to form Asp-AMP and then transferred to the acceptor end of tRNA(Asp). The chain is Aspartate--tRNA ligase from Xanthomonas oryzae pv. oryzae (strain PXO99A).